The primary structure comprises 154 residues: UPF0225 protein Spro_2712 (154 aa).

This sequence belongs to the UPF0225 family.

The sequence is that of UPF0225 protein Spro_2712 from Serratia proteamaculans (strain 568).